Consider the following 211-residue polypeptide: uncharacterized protein (211 aa).

Disordered stretches follow at residues 45 to 74 and 147 to 211; these read RSCG…GALS and AETR…WEEP. A compositionally biased stretch (low complexity) spans 48–71; the sequence is GRSSTGGCSPCSGPGPSSPRTSRG. Positions 195 to 205 are enriched in polar residues; that stretch reads DSGSIKMSENE.

This is an uncharacterized protein from Homo sapiens (Human).